Reading from the N-terminus, the 124-residue chain is Glycine cleavage system H protein (124 aa).

In terms of domain architecture, Lipoyl-binding spans 22–104 (LVITGITDHA…YGKGWIYKIK (83 aa)). Position 63 is an N6-lipoyllysine (Lys63).

It belongs to the GcvH family. In terms of assembly, the glycine cleavage system is composed of four proteins: P, T, L and H. The cofactor is (R)-lipoate.

In terms of biological role, the glycine cleavage system catalyzes the degradation of glycine. The H protein shuttles the methylamine group of glycine from the P protein to the T protein. In Acinetobacter baumannii (strain SDF), this protein is Glycine cleavage system H protein.